Here is a 142-residue protein sequence, read N- to C-terminus: MKTYLAPVNEIEKEWYVVDAENKVLGRLASEIASRLRGKHKPTFSSFIDNGDFIVVTNAEKIALTGKKWDDKTYYRHTGYIGGIKETSAKELLEKHPTDLITKAVRGMLPKNKMGRAQLKKLKVYVGAAHPHAAQQPTVLDI.

It belongs to the universal ribosomal protein uL13 family. Part of the 50S ribosomal subunit.

In terms of biological role, this protein is one of the early assembly proteins of the 50S ribosomal subunit, although it is not seen to bind rRNA by itself. It is important during the early stages of 50S assembly. In Desulfotalea psychrophila (strain LSv54 / DSM 12343), this protein is Large ribosomal subunit protein uL13.